Here is a 428-residue protein sequence, read N- to C-terminus: MSFDINWNQLTIDDTINQSIKEFLDQQFKNISLPSFISNLAVTDFNLGEIPPEVTIRHIGDPFEEFYEDENNLGVMNEANNDSKDEHLKNHGDGINKDSGYNSQNLDDEDEDDEDDDEDDEDEEEEDEDDYDDHDLGTINEGISLLNFNENSTTPSANSFAGSAAPPLPPPLNPSRDSFHSILHPYGVNSIIGATGAGSETPTNILNQNYLSSRVLPKISVKQKQPHHDDNDIQLIVEINYKGDMHINLLVNLLVNYPSPNFISLPIKLHITDIVIHSIATIAYLKKSVFLSFLCDVDDTFPDFDSNVQTPTSTTGGNFVDYYSNDATINKERIDIVKKIKIESEIGEVENNILRNVGKVEKFLVEQLRNILRDEIAWPSWICIDMNDDDDEEEEEEESEDNDGGNSDLNDNDGKHGDGRTDETEAGE.

The region spanning 1 to 387 (MSFDINWNQL…WPSWICIDMN (387 aa)) is the SMP-LTD domain. Disordered stretches follow at residues 75-168 (VMNE…APPL) and 387-428 (NDDD…EAGE). Residues 81–96 (NDSKDEHLKNHGDGIN) are compositionally biased toward basic and acidic residues. The span at 106–133 (LDDEDEDDEDDDEDDEDEEEEDEDDYDD) shows a compositional bias: acidic residues. A compositionally biased stretch (polar residues) spans 146–161 (LNFNENSTTPSANSFA). Over residues 387–403 (NDDDDEEEEEEESEDND) the composition is skewed to acidic residues. The segment covering 412-428 (NDGKHGDGRTDETEAGE) has biased composition (basic and acidic residues).

This sequence belongs to the MDM12 family. Component of the ER-mitochondria encounter structure (ERMES) or MDM complex, composed of MMM1, MDM10, MDM12 and MDM34. An MMM1 homodimer associates with one molecule of MDM12 on each side in a pairwise head-to-tail manner, and the SMP-LTD domains of MMM1 and MDM12 generate a continuous hydrophobic tunnel for phospholipid trafficking.

It localises to the mitochondrion outer membrane. It is found in the endoplasmic reticulum membrane. Functionally, component of the ERMES/MDM complex, which serves as a molecular tether to connect the endoplasmic reticulum (ER) and mitochondria. Components of this complex are involved in the control of mitochondrial shape and protein biogenesis, and function in nonvesicular lipid trafficking between the ER and mitochondria. MDM12 is required for the interaction of the ER-resident membrane protein MMM1 and the outer mitochondrial membrane-resident beta-barrel protein MDM10. The MDM12-MMM1 subcomplex functions in the major beta-barrel assembly pathway that is responsible for biogenesis of all mitochondrial outer membrane beta-barrel proteins, and acts in a late step after the SAM complex. The MDM10-MDM12-MMM1 subcomplex further acts in the TOM40-specific pathway after the action of the MDM12-MMM1 complex. Essential for establishing and maintaining the structure of mitochondria and maintenance of mtDNA nucleoids. The protein is Mitochondrial distribution and morphology protein 12 of Candida albicans (strain SC5314 / ATCC MYA-2876) (Yeast).